Consider the following 182-residue polypeptide: Adenine phosphoribosyltransferase (182 aa).

The protein belongs to the purine/pyrimidine phosphoribosyltransferase family. In terms of assembly, homodimer.

It is found in the cytoplasm. It carries out the reaction AMP + diphosphate = 5-phospho-alpha-D-ribose 1-diphosphate + adenine. It participates in purine metabolism; AMP biosynthesis via salvage pathway; AMP from adenine: step 1/1. Catalyzes a salvage reaction resulting in the formation of AMP, that is energically less costly than de novo synthesis. The chain is Adenine phosphoribosyltransferase from Saccharopolyspora erythraea (strain ATCC 11635 / DSM 40517 / JCM 4748 / NBRC 13426 / NCIMB 8594 / NRRL 2338).